Consider the following 358-residue polypeptide: NADH-quinone oxidoreductase subunit H (358 aa).

A run of 8 helical transmembrane segments spans residues 29–49 (LIKI…LTLW), 95–115 (GLFY…WAVI), 130–150 (LLLV…AGWA), 176–196 (FCFL…IVAV), 206–226 (GLGF…VYLI), 258–280 (GFAI…AVVM), 297–317 (GWIW…WIRA), and 334–354 (IFIP…LSPW).

Belongs to the complex I subunit 1 family. NDH-1 is composed of 14 different subunits. Subunits NuoA, H, J, K, L, M, N constitute the membrane sector of the complex.

It localises to the cell inner membrane. The enzyme catalyses a quinone + NADH + 5 H(+)(in) = a quinol + NAD(+) + 4 H(+)(out). NDH-1 shuttles electrons from NADH, via FMN and iron-sulfur (Fe-S) centers, to quinones in the respiratory chain. The immediate electron acceptor for the enzyme in this species is believed to be ubiquinone. Couples the redox reaction to proton translocation (for every two electrons transferred, four hydrogen ions are translocated across the cytoplasmic membrane), and thus conserves the redox energy in a proton gradient. This subunit may bind ubiquinone. The sequence is that of NADH-quinone oxidoreductase subunit H from Acidovorax sp. (strain JS42).